Here is a 116-residue protein sequence, read N- to C-terminus: DNA-binding protein Tpen_0471 (116 aa).

This sequence belongs to the PDCD5 family.

In Thermofilum pendens (strain DSM 2475 / Hrk 5), this protein is DNA-binding protein Tpen_0471.